The chain runs to 169 residues: Disulfide bond formation protein B (169 aa).

Over 1–14 the chain is Cytoplasmic; that stretch reads MNNLTLSLRRERRL. Residues 15 to 31 form a helical membrane-spanning segment; the sequence is LVLLALVCLALLAGALY. Topologically, residues 32 to 49 are periplasmic; it reads LQYVKNEDPCPLCIIQRY. C41 and C44 are disulfide-bonded. The helical transmembrane segment at 50 to 64 threads the bilayer; the sequence is FFVLIAVFAFIGAGM. The Cytoplasmic portion of the chain corresponds to 65–71; sequence ASGAGVA. A helical transmembrane segment spans residues 72–89; sequence VTEALIVLSAAAGVGTAA. Residues 90–144 are Periplasmic-facing; sequence RHLYVQLNPGFSCGFDALQPVVDSLPPARWLPGVFKVAGLCETVYPPIFGILLPG. C102 and C130 are oxidised to a cystine. A helical transmembrane segment spans residues 145-163; sequence WALIAFVLIAVPVAVSLLR. At 164–169 the chain is on the cytoplasmic side; the sequence is HRGRLR.

Belongs to the DsbB family.

It localises to the cell inner membrane. Its function is as follows. Required for disulfide bond formation in some periplasmic proteins. Acts by oxidizing the DsbA protein. The polypeptide is Disulfide bond formation protein B (Burkholderia mallei (strain ATCC 23344)).